Consider the following 518-residue polypeptide: ORC1-type DNA replication protein 7 (518 aa).

An ATP-binding site is contributed by 94–98 (TGKTA). The interval 165–196 (DDDPNALEIGGSPGDDRTGNESSEGSDVSDSF) is disordered. Positions 186-196 (SSEGSDVSDSF) are enriched in low complexity. 2 residues coordinate ATP: Y318 and R330.

The protein belongs to the CDC6/cdc18 family.

In terms of biological role, involved in regulation of DNA replication. Required to initiate DNA replication of the circular chromosome at a nearby autonomously replicating sequence (ARS) oriC1. The chain is ORC1-type DNA replication protein 7 (orc7) from Halobacterium salinarum (strain ATCC 700922 / JCM 11081 / NRC-1) (Halobacterium halobium).